The sequence spans 67 residues: UPF0434 protein Reut_A0592 (67 aa).

This sequence belongs to the UPF0434 family.

The sequence is that of UPF0434 protein Reut_A0592 from Cupriavidus pinatubonensis (strain JMP 134 / LMG 1197) (Cupriavidus necator (strain JMP 134)).